A 160-amino-acid polypeptide reads, in one-letter code: MSKSSRGGRQIVASNRKARHNYSIIEVFEAGVALQGTEVKSLREGQASLADSFATIDDGEVWLRNAHIPEYRHGSWTNHEPRRNRKLLLHRRQIDTLVGKIREGNFALVPLSLYFAEGKVKVELALARGKQARDKRQDMARRDAQREVLRELGRRAKGMT.

This sequence belongs to the SmpB family.

The protein localises to the cytoplasm. Its function is as follows. Required for rescue of stalled ribosomes mediated by trans-translation. Binds to transfer-messenger RNA (tmRNA), required for stable association of tmRNA with ribosomes. tmRNA and SmpB together mimic tRNA shape, replacing the anticodon stem-loop with SmpB. tmRNA is encoded by the ssrA gene; the 2 termini fold to resemble tRNA(Ala) and it encodes a 'tag peptide', a short internal open reading frame. During trans-translation Ala-aminoacylated tmRNA acts like a tRNA, entering the A-site of stalled ribosomes, displacing the stalled mRNA. The ribosome then switches to translate the ORF on the tmRNA; the nascent peptide is terminated with the 'tag peptide' encoded by the tmRNA and targeted for degradation. The ribosome is freed to recommence translation, which seems to be the essential function of trans-translation. In Mycobacterium bovis (strain ATCC BAA-935 / AF2122/97), this protein is SsrA-binding protein.